Reading from the N-terminus, the 129-residue chain is MAKTATKVRKKVKKNVAEGIAHIHASFNNTIITITDRQGNALSWATSGGAGFRGSRKSTPFAAQVAAEAAGKAAQECGVKNVEVRIKGPGPGRESSVRALNALGMKITSISDVTPVPHNGCRPPKKRRI.

The protein belongs to the universal ribosomal protein uS11 family. As to quaternary structure, part of the 30S ribosomal subunit. Interacts with proteins S7 and S18. Binds to IF-3.

Functionally, located on the platform of the 30S subunit, it bridges several disparate RNA helices of the 16S rRNA. Forms part of the Shine-Dalgarno cleft in the 70S ribosome. This chain is Small ribosomal subunit protein uS11, found in Dechloromonas aromatica (strain RCB).